The following is a 489-amino-acid chain: Ent-kaurenoic acid oxidase 2 (489 aa).

A helical membrane pass occupies residues 5 to 25; that stretch reads GLILMWFPLIILGLFVLKWVL. Residue cysteine 436 participates in heme binding.

Belongs to the cytochrome P450 family. Heme serves as cofactor. In terms of tissue distribution, widely expressed. Highly expressed in influorescence stem, influorescence, and silique tissue. Weakly expressed in cauline and rosette leaves. Expressed at a weaker level in stem and influorescence than AtKAO1/CYP88A3.

Its subcellular location is the endoplasmic reticulum membrane. The enzyme catalyses ent-kaur-16-en-19-oate + 3 reduced [NADPH--hemoprotein reductase] + 3 O2 = gibberellin A12 + 3 oxidized [NADPH--hemoprotein reductase] + 4 H2O + 4 H(+). The catalysed reaction is ent-kaur-16-en-19-oate + reduced [NADPH--hemoprotein reductase] + O2 = ent-7alpha-hydroxykaur-16-en-19-oate + oxidized [NADPH--hemoprotein reductase] + H2O + H(+). It carries out the reaction ent-7alpha-hydroxykaur-16-en-19-oate + reduced [NADPH--hemoprotein reductase] + O2 = gibberellin A12 aldehyde + oxidized [NADPH--hemoprotein reductase] + 2 H2O + H(+). It catalyses the reaction gibberellin A12 aldehyde + reduced [NADPH--hemoprotein reductase] + O2 = gibberellin A12 + oxidized [NADPH--hemoprotein reductase] + H2O + 2 H(+). Its pathway is plant hormone biosynthesis; gibberellin biosynthesis. Functionally, catalyzes three successive oxidations of ent-kaurenoic acid giving gibberellin 12 (GA12), a key step in gibberellins (GAs) biosynthesis. GAs, which are involved many processes, including stem elongation, play a central role in plant development. The sequence is that of Ent-kaurenoic acid oxidase 2 from Arabidopsis thaliana (Mouse-ear cress).